The sequence spans 783 residues: Probable phosphoketolase (783 aa).

This sequence belongs to the XFP family. The cofactor is thiamine diphosphate.

In Rhodopseudomonas palustris (strain ATCC BAA-98 / CGA009), this protein is Probable phosphoketolase.